We begin with the raw amino-acid sequence, 359 residues long: Peptide chain release factor 1 (359 aa).

The residue at position 238 (Q238) is an N5-methylglutamine.

Belongs to the prokaryotic/mitochondrial release factor family. In terms of processing, methylated by PrmC. Methylation increases the termination efficiency of RF1.

It is found in the cytoplasm. In terms of biological role, peptide chain release factor 1 directs the termination of translation in response to the peptide chain termination codons UAG and UAA. The protein is Peptide chain release factor 1 of Rhodococcus jostii (strain RHA1).